The sequence spans 210 residues: MAEYSQTGILTALLLFTVVTVKDIYVGRNSVTQQENTGPDINTQRQNKHTFYTGPVLKFQYCISUGYSKVFQEYSRSISQLYPDIRIEGDNYPPKPINKYLGNFLSYFKLLAIALIVTGQNPFQMFGMNTPRIWAWGQENKIFSCLMAFFISNMLETHFLSTGAFEITLNDIPIWSKLQSGYVPNIQELFQILDNHLKMNQADKMNFPSP.

An N-terminal signal peptide occupies residues 1 to 21 (MAEYSQTGILTALLLFTVVTV). The segment at residues 62 to 65 (CISU) is a cross-link (cysteinyl-selenocysteine (Cys-Sec)). Position 65 (Sec65) is a non-standard amino acid, selenocysteine.

Belongs to the SelWTH family. Selenoprotein T subfamily. In terms of processing, may contain a selenide-sulfide bond between Cys-62 and Sec-65. This bond is speculated to serve as redox-active pair. In terms of tissue distribution, widely expressed in the embryo.

In Danio rerio (Zebrafish), this protein is Selenoprotein T2.